Consider the following 529-residue polypeptide: Cytochrome P450 monooxygenase okaD (529 aa).

Residues 13–35 traverse the membrane as a helical segment; sequence LPAQHLLASLALVGALLSVGYLL. Cysteine 435 is a binding site for heme.

The protein belongs to the cytochrome P450 family. It depends on heme as a cofactor.

The protein localises to the membrane. The enzyme catalyses okaramine C + 2 reduced [NADPH--hemoprotein reductase] + 2 O2 = okaramine A + 2 oxidized [NADPH--hemoprotein reductase] + 4 H2O + 2 H(+). Its pathway is alkaloid biosynthesis. In terms of biological role, cytochrome P450 monooxygenase; part of the gene cluster that mediates the biosynthesis of okaramine B, a prenylated indole alkaloid that possesses an unusual octacyclic ring system, including a four-membered azetidine ring and an eight-membered azocine ring, and that exhibits insecticidal activity against silkworm larvae. Within the pathway, okaD likely catalyzes a key step in forming the eight-membered ring of okaramine A using as substrate okaramine C. The biosynthesis begins with the NRPS okaA that condenses two tryptophan molecules into cyclo(L-Trp-L-Trp). Prenylation by the prenyltransferase okaC then leads to the formation of cyclo(N8-(alpha,alpha-dimethylallyl)-L-Trp-6a-(alpha,alpha-dime-thylallyl)-L-Trp). This is followed by indole 2,3-epoxidation by the FAD-dependent monooxygenase okaB to facilitate the formation of the hexahydropyrrolo[2,3-b]indole (HPI) moiety of okaramine C. The cytochrome P450 monooxygenase okaD then likely catalyzes formation of the eight-membered ring of okaramine A. The dioxygenase okaE further forms the unusual 2-dimethyl-3-methyl-azetidine ring to yield 12-deshydroxyl okaramine E, as well as the hydroxylation of 12-deshydroxyl okaramine E to produce okaramine E. The cytochrome P450 monoxygenase okaG converts 12-deshydroxyl okaramine E into 3-desmethyl okaramine B which is further methylated by the methyltransferase okaF into okaramine B. In a shunt pathway, okaG and okaF together are also able to convert okaramine E into okaramine D. Okaramine H is produced by nonenzymatic conversion from okaramine A. This chain is Cytochrome P450 monooxygenase okaD, found in Penicillium ochrochloron.